A 1415-amino-acid chain; its full sequence is DNA-directed RNA polymerase subunit beta' (1415 aa).

Zn(2+) contacts are provided by C214, C294, C301, and C304. Polar residues predominate over residues 1335 to 1351 (QNFVDSQGKPQSQSSFI). Residues 1335 to 1390 (QNFVDSQGKPQSQSSFIDDSMSEFSPVKDKSGSVLDDSDFPPGNFDSDFPADNYDL) are disordered.

Belongs to the RNA polymerase beta' chain family. RpoC2 subfamily. In cyanobacteria the RNAP catalytic core is composed of 2 alpha, 1 beta, 1 beta', 1 gamma and 1 omega subunit. When a sigma factor is associated with the core the holoenzyme is formed, which can initiate transcription. The cofactor is Zn(2+).

It catalyses the reaction RNA(n) + a ribonucleoside 5'-triphosphate = RNA(n+1) + diphosphate. DNA-dependent RNA polymerase catalyzes the transcription of DNA into RNA using the four ribonucleoside triphosphates as substrates. The sequence is that of DNA-directed RNA polymerase subunit beta' from Trichodesmium erythraeum (strain IMS101).